The following is a 504-amino-acid chain: Arabinose import ATP-binding protein AraG (504 aa).

ABC transporter domains follow at residues 8–243 and 256–499; these read LSFR…MVGR and YGEE…MPKV. Position 40–47 (40–47) interacts with ATP; that stretch reads GENGAGKS.

The protein belongs to the ABC transporter superfamily. Arabinose importer (TC 3.A.1.2.2) family. The complex is composed of two ATP-binding proteins (AraG), two transmembrane proteins (AraH) and a solute-binding protein (AraF).

The protein resides in the cell inner membrane. The catalysed reaction is L-arabinose(out) + ATP + H2O = L-arabinose(in) + ADP + phosphate + H(+). Functionally, part of the ABC transporter complex AraFGH involved in arabinose import. Responsible for energy coupling to the transport system. In Shigella boydii serotype 4 (strain Sb227), this protein is Arabinose import ATP-binding protein AraG.